Consider the following 84-residue polypeptide: Small ribosomal subunit protein bS20 (84 aa).

Residues 1 to 25 (MANIVSNEKTYRHTQKVRKENHAKM) form a disordered region.

This sequence belongs to the bacterial ribosomal protein bS20 family.

Functionally, binds directly to 16S ribosomal RNA. In Ureaplasma parvum serovar 3 (strain ATCC 700970), this protein is Small ribosomal subunit protein bS20.